Consider the following 420-residue polypeptide: Polyketide biosynthesis 3-hydroxy-3-methylglutaryl-ACP synthase PksG (420 aa).

The active-site Proton donor/acceptor is Glu82. Cys114 serves as the catalytic Acyl-thioester intermediate. His250 functions as the Proton donor/acceptor in the catalytic mechanism.

This sequence belongs to the thiolase-like superfamily. HMG-CoA synthase family.

The protein resides in the cytoplasm. The enzyme catalyses 3-oxobutanoyl-[ACP] + acetyl-[ACP] + H2O = (3S)-hydroxy-3-methylglutaryl-[ACP] + holo-[ACP] + H(+). It functions in the pathway antibiotic biosynthesis; bacillaene biosynthesis. Functionally, involved in some intermediate steps for the synthesis of the antibiotic polyketide bacillaene which is involved in secondary metabolism. It catalyzes the aldol condensation between the acetyl group attached to the acyl-carrier-protein AcpK (Ac-AcpK) and a beta-ketothioester polyketide intermediate linked to one of the consecutive thiolation domains of PksL. The chain is Polyketide biosynthesis 3-hydroxy-3-methylglutaryl-ACP synthase PksG (pksG) from Bacillus subtilis (strain 168).